A 480-amino-acid polypeptide reads, in one-letter code: Probable glycosyltransferase At5g25310 (480 aa).

Residues 1–10 (MDKFQSKFTR) are Cytoplasmic-facing. Residues 11–31 (FGFISICFGSIALVLLISHCS) form a helical; Signal-anchor for type II membrane protein membrane-spanning segment. Topologically, residues 32–480 (TSFFDYSFQK…WLRRLNLKLT (449 aa)) are lumenal. 5 N-linked (GlcNAc...) asparagine glycosylation sites follow: N85, N120, N243, N271, and N281.

Belongs to the glycosyltransferase 47 family.

The protein resides in the golgi apparatus membrane. In terms of biological role, may be involved in cell wall biosynthesis. The sequence is that of Probable glycosyltransferase At5g25310 from Arabidopsis thaliana (Mouse-ear cress).